Here is a 141-residue protein sequence, read N- to C-terminus: Photosystem I reaction center subunit IV A, chloroplastic (141 aa).

A chloroplast-targeting transit peptide spans 1–49; sequence MASCNMASAASNFLVATPNVASNTNTSRTTMLFFSSKNYGSTAPRLVVR. Low complexity predominate over residues 57-73; it reads PAAAATAEPAEAPVKAA. The segment at 57 to 83 is disordered; that stretch reads PAAAATAEPAEAPVKAAKPPPIGPKRG.

This sequence belongs to the PsaE family. In terms of processing, 2 isoforms exists (ratio 1:1). With or without the N-terminal alanine.

It is found in the plastid. The protein resides in the chloroplast thylakoid membrane. Its function is as follows. Stabilizes the interaction between PsaC and the PSI core, assists the docking of the ferredoxin to PSI and interacts with ferredoxin-NADP oxidoreductase. This Nicotiana sylvestris (Wood tobacco) protein is Photosystem I reaction center subunit IV A, chloroplastic (PSAEA).